We begin with the raw amino-acid sequence, 391 residues long: Immunoglobulin heavy constant alpha 2 (391 aa).

Residues 1–357 (ASPTSPKVFP…TPGANLWPTT (357 aa)) lie on the Extracellular side of the membrane. 3 Ig-like domains span residues 6–98 (PKVF…QDVT), 112–207 (PRLS…ANIT), and 215–317 (PEVH…KTID). Cys-26 and Cys-85 are oxidised to a cystine. An N-linked (GlcNAc...) asparagine glycan is attached at Asn-47. Asn-92 carries an N-linked (GlcNAc...) (complex) asparagine glycan. Intrachain disulfides connect Cys-110-Cys-167 and Cys-134-Cys-191. A glycan (N-linked (GlcNAc...) asparagine) is linked at Asn-131. Asn-205 is a glycosylation site (N-linked (GlcNAc...) (complex) asparagine). Cysteines 237 and 300 form a disulfide. N-linked (GlcNAc...) (complex) asparagine glycosylation occurs at Asp-327. A helical transmembrane segment spans residues 358–379 (ITFLTLFLLSLFYSTALTVTSV). The Cytoplasmic portion of the chain corresponds to 380–391 (RGPSGKREGPQY).

As to quaternary structure, immunoglobulins are composed of two identical heavy chains and two identical light chains; disulfide-linked. Monomeric or polymeric. Part of the secretory IgA (sIgA) complex that consists of two, four or five IgA monomers, and two additional non-Ig polypeptides, namely the JCHAIN and the secretory component (the proteolytic product of PIGR).

The protein resides in the secreted. The protein localises to the cell membrane. Functionally, constant region of immunoglobulin heavy chains. Immunoglobulins, also known as antibodies, are membrane-bound or secreted glycoproteins produced by B lymphocytes. In the recognition phase of humoral immunity, the membrane-bound immunoglobulins serve as receptors which, upon binding of a specific antigen, trigger the clonal expansion and differentiation of B lymphocytes into immunoglobulins-secreting plasma cells. Secreted immunoglobulins mediate the effector phase of humoral immunity, which results in the elimination of bound antigens. The antigen binding site is formed by the variable domain of one heavy chain, together with that of its associated light chain. Thus, each immunoglobulin has two antigen binding sites with remarkable affinity for a particular antigen. The variable domains are assembled by a process called V-(D)-J rearrangement and can then be subjected to somatic hypermutations which, after exposure to antigen and selection, allow affinity maturation for a particular antigen. Ig alpha is the major immunoglobulin class in body secretions. The sequence is that of Immunoglobulin heavy constant alpha 2 from Homo sapiens (Human).